The chain runs to 277 residues: Acetyl-coenzyme A carboxylase carboxyl transferase subunit beta (277 aa).

The CoA carboxyltransferase N-terminal domain occupies 22 to 277; that stretch reads LWTKCPGCNR…TLKQLLYFLT (256 aa). Positions 26, 29, 45, and 48 each coordinate Zn(2+). The segment at 26–48 adopts a C4-type zinc-finger fold; it reads CPGCNRFLYTKELELNQSVCHYC.

The protein belongs to the AccD/PCCB family. In terms of assembly, acetyl-CoA carboxylase is a heterohexamer composed of biotin carboxyl carrier protein (AccB), biotin carboxylase (AccC) and two subunits each of ACCase subunit alpha (AccA) and ACCase subunit beta (AccD). Zn(2+) is required as a cofactor.

It localises to the cytoplasm. It catalyses the reaction N(6)-carboxybiotinyl-L-lysyl-[protein] + acetyl-CoA = N(6)-biotinyl-L-lysyl-[protein] + malonyl-CoA. It participates in lipid metabolism; malonyl-CoA biosynthesis; malonyl-CoA from acetyl-CoA: step 1/1. Its function is as follows. Component of the acetyl coenzyme A carboxylase (ACC) complex. Biotin carboxylase (BC) catalyzes the carboxylation of biotin on its carrier protein (BCCP) and then the CO(2) group is transferred by the transcarboxylase to acetyl-CoA to form malonyl-CoA. The polypeptide is Acetyl-coenzyme A carboxylase carboxyl transferase subunit beta (Methylacidiphilum infernorum (isolate V4) (Methylokorus infernorum (strain V4))).